The following is a 330-amino-acid chain: Sulfate/thiosulfate import ATP-binding protein CysA (330 aa).

Residues 3 to 237 enclose the ABC transporter domain; that stretch reads IEIRNINKQF…PASEFVYHFL (235 aa). 35-42 is an ATP binding site; sequence GPSGCGKT.

The protein belongs to the ABC transporter superfamily. Sulfate/tungstate importer (TC 3.A.1.6) family. As to quaternary structure, the complex is composed of two ATP-binding proteins (CysA), two transmembrane proteins (CysT and CysW) and a solute-binding protein (CysP).

Its subcellular location is the cell inner membrane. It carries out the reaction sulfate(out) + ATP + H2O = sulfate(in) + ADP + phosphate + H(+). It catalyses the reaction thiosulfate(out) + ATP + H2O = thiosulfate(in) + ADP + phosphate + H(+). Functionally, part of the ABC transporter complex CysAWTP involved in sulfate/thiosulfate import. Responsible for energy coupling to the transport system. The chain is Sulfate/thiosulfate import ATP-binding protein CysA from Pectobacterium atrosepticum (strain SCRI 1043 / ATCC BAA-672) (Erwinia carotovora subsp. atroseptica).